The primary structure comprises 494 residues: Cysteine--tRNA ligase (494 aa).

Position 29 (Cys-29) interacts with Zn(2+). A 'HIGH' region motif is present at residues 31-41; sequence LTVSDDAHLGH. The tract at residues 187-220 is disordered; the sequence is KAGGVSPDDANTHRDDELPPLDGERGQTWASPWG. Residues 196-211 show a composition bias toward basic and acidic residues; sequence ANTHRDDELPPLDGER. Zn(2+) contacts are provided by Cys-230, His-255, and Glu-259. Residues 287 to 291 carry the 'KMSKS' region motif; sequence KMSSS.

This sequence belongs to the class-I aminoacyl-tRNA synthetase family. The cofactor is Zn(2+).

The protein localises to the cytoplasm. It catalyses the reaction tRNA(Cys) + L-cysteine + ATP = L-cysteinyl-tRNA(Cys) + AMP + diphosphate. This chain is Cysteine--tRNA ligase, found in Halobacterium salinarum (strain ATCC 700922 / JCM 11081 / NRC-1) (Halobacterium halobium).